The chain runs to 344 residues: Selenide, water dikinase (344 aa).

Cysteine 15 is a catalytic residue. ATP is bound by residues lysine 18 and 46–48 (TKD). Residue aspartate 49 coordinates Mg(2+). ATP is bound by residues aspartate 66, aspartate 89, and 137–139 (GHS). Aspartate 89 provides a ligand contact to Mg(2+). Aspartate 225 is a Mg(2+) binding site.

This sequence belongs to the selenophosphate synthase 1 family. Class I subfamily. Homodimer. The cofactor is Mg(2+).

The catalysed reaction is hydrogenselenide + ATP + H2O = selenophosphate + AMP + phosphate + 2 H(+). In terms of biological role, synthesizes selenophosphate from selenide and ATP. This is Selenide, water dikinase from Colwellia psychrerythraea (strain 34H / ATCC BAA-681) (Vibrio psychroerythus).